Reading from the N-terminus, the 510-residue chain is Inositol-3-phosphate synthase (510 aa).

NAD(+) is bound by residues Gly70, Gly71, Asn72, Asn73, Asp143, Ile180, Gln190, Arg193, Thr230, Ala231, Asn232, Thr233, Gly281, Ser282, Asp306, Ser309, Asn340, Asn341, Asp342, Lys355, Gly393, Asp394, Asp422, and Ser423.

The protein belongs to the myo-inositol 1-phosphate synthase family. NAD(+) serves as cofactor.

Its subcellular location is the cytoplasm. It is found in the cytosol. The protein resides in the nucleus. The catalysed reaction is D-glucose 6-phosphate = 1D-myo-inositol 3-phosphate. It participates in polyol metabolism; myo-inositol biosynthesis; myo-inositol from D-glucose 6-phosphate: step 1/2. In terms of biological role, key enzyme in myo-inositol biosynthesis pathway that catalyzes the conversion of glucose 6-phosphate to 1-myo-inositol 1-phosphate in a NAD-dependent manner. The chain is Inositol-3-phosphate synthase (INPS1) from Nicotiana paniculata.